We begin with the raw amino-acid sequence, 758 residues long: 5-methyltetrahydropteroyltriglutamate--homocysteine methyltransferase (758 aa).

Residues 17–20 (RELK) and Lys117 each bind 5-methyltetrahydropteroyltri-L-glutamate. Residues 434-436 (IGS) and Glu487 contribute to the L-homocysteine site. L-methionine is bound by residues 434–436 (IGS) and Glu487. 5-methyltetrahydropteroyltri-L-glutamate is bound by residues 518 to 519 (RC) and Trp564. L-homocysteine is bound at residue Asp602. Asp602 contributes to the L-methionine binding site. Residue Glu608 participates in 5-methyltetrahydropteroyltri-L-glutamate binding. The Zn(2+) site is built by His644, Cys646, and Glu668. Catalysis depends on His697, which acts as the Proton donor. Cys729 provides a ligand contact to Zn(2+).

It belongs to the vitamin-B12 independent methionine synthase family. It depends on Zn(2+) as a cofactor.

It carries out the reaction 5-methyltetrahydropteroyltri-L-glutamate + L-homocysteine = tetrahydropteroyltri-L-glutamate + L-methionine. It participates in amino-acid biosynthesis; L-methionine biosynthesis via de novo pathway; L-methionine from L-homocysteine (MetE route): step 1/1. In terms of biological role, catalyzes the transfer of a methyl group from 5-methyltetrahydrofolate to homocysteine resulting in methionine formation. In Yersinia pestis bv. Antiqua (strain Antiqua), this protein is 5-methyltetrahydropteroyltriglutamate--homocysteine methyltransferase.